The primary structure comprises 335 residues: Probable deoxyhypusine synthase (335 aa).

Residue K308 is the Nucleophile of the active site.

It belongs to the deoxyhypusine synthase family. NAD(+) serves as cofactor.

The enzyme catalyses [eIF5A protein]-L-lysine + spermidine = [eIF5A protein]-deoxyhypusine + propane-1,3-diamine. The protein operates within protein modification; eIF5A hypusination. Functionally, catalyzes the NAD-dependent oxidative cleavage of spermidine and the subsequent transfer of the butylamine moiety of spermidine to the epsilon-amino group of a specific lysine residue of the eIF-5A precursor protein to form the intermediate deoxyhypusine residue. This is Probable deoxyhypusine synthase from Thermococcus onnurineus (strain NA1).